A 429-amino-acid polypeptide reads, in one-letter code: Glutamate-1-semialdehyde 2,1-aminomutase (429 aa).

N6-(pyridoxal phosphate)lysine is present on Lys-265.

It belongs to the class-III pyridoxal-phosphate-dependent aminotransferase family. HemL subfamily. In terms of assembly, homodimer. Requires pyridoxal 5'-phosphate as cofactor.

Its subcellular location is the cytoplasm. The catalysed reaction is (S)-4-amino-5-oxopentanoate = 5-aminolevulinate. Its pathway is porphyrin-containing compound metabolism; protoporphyrin-IX biosynthesis; 5-aminolevulinate from L-glutamyl-tRNA(Glu): step 2/2. This Acidobacterium capsulatum (strain ATCC 51196 / DSM 11244 / BCRC 80197 / JCM 7670 / NBRC 15755 / NCIMB 13165 / 161) protein is Glutamate-1-semialdehyde 2,1-aminomutase.